A 122-amino-acid polypeptide reads, in one-letter code: Large ribosomal subunit protein uL14 (122 aa).

This sequence belongs to the universal ribosomal protein uL14 family. As to quaternary structure, part of the 50S ribosomal subunit. Forms a cluster with proteins L3 and L19. In the 70S ribosome, L14 and L19 interact and together make contacts with the 16S rRNA in bridges B5 and B8.

In terms of biological role, binds to 23S rRNA. Forms part of two intersubunit bridges in the 70S ribosome. In Elusimicrobium minutum (strain Pei191), this protein is Large ribosomal subunit protein uL14.